We begin with the raw amino-acid sequence, 377 residues long: Uroporphyrinogen decarboxylase (377 aa).

Residues 40-44, D89, Y169, S224, and H354 contribute to the substrate site; that span reads RQAGR.

The protein belongs to the uroporphyrinogen decarboxylase family. Homodimer.

It localises to the cytoplasm. It catalyses the reaction uroporphyrinogen III + 4 H(+) = coproporphyrinogen III + 4 CO2. The protein operates within porphyrin-containing compound metabolism; protoporphyrin-IX biosynthesis; coproporphyrinogen-III from 5-aminolevulinate: step 4/4. Catalyzes the decarboxylation of four acetate groups of uroporphyrinogen-III to yield coproporphyrinogen-III. This Leifsonia xyli subsp. xyli (strain CTCB07) protein is Uroporphyrinogen decarboxylase.